The primary structure comprises 781 residues: MSPLSLPVATLGTPRIGPRRELKLALESYWAGKISEQQLHEDAFGLRAANWARQKSLGVTIIPSNDFSLYDQVLDTSVMVGAIPEIYAANGESVSLQTYFAMARGSQCGEQDASCAQSPRGSGVPAQEMTKWFDTNYHYMVPEFYRGQAFRLCSRKPVEEYEEARALGFQTRPVLIGPVTFLKLGKSTDSAFQPLSLLDDLIPVYIDLLHELAKRGASWVQFDEPCLVLDLDEAARNSLLHAYNRFAKEGPAIKIMLASYFGALGDNLDTALSLPISGLHVDLVRAPELLDQIVADGRSDLVMSLGVIDGRNVWRSNLPSLRQRLKPSIAKLGRHRVQLAPSCSLLHVPVDVELETGLASDVKSWLAFSVQKMRELAILARVLAGDQNVGLALAESECAATARRTSPKIHNANVAVRMRAIDQTMRQRATPFARRSEIQRERFGLPAFPTTTIGSFPQTTAVRNARAAHARGAMSEEQYDRFLKEEIARAVRWQEDIGLDVLVHGEFERNDMVQYFSEQLAGFAFTRNGWVQSYGSRCVRPPILFGDVVRPKPITVEWWRYAQSLTSKPMKAMLTGPVTILNWSFVRDDIPRSEVCRQLALAMRDEVRDLENAGAAMIQIDEAALREGLPLRRSDWKAYLDWAGDCFRICSSGVTDQTQIHTHMCYSEFNDIIGAIAAMDADVISIETSRSKMELLDAFRRYEYPNQIGPGVYDIHSPRVPETDEMKELIVLARTRLQDSQLWVNPDCGLKTRKWEEVRPALANMVAAARELRAASDPQIR.

Residues 20–23 and lysine 131 each bind 5-methyltetrahydropteroyltri-L-glutamate; that span reads RELK. L-homocysteine is bound by residues 453–455 and glutamate 506; that span reads IGS. L-methionine contacts are provided by residues 453–455 and glutamate 506; that span reads IGS. Residues 537 to 538 and tryptophan 583 contribute to the 5-methyltetrahydropteroyltri-L-glutamate site; that span reads RC. Position 621 (aspartate 621) interacts with L-homocysteine. L-methionine is bound at residue aspartate 621. Glutamate 627 contributes to the 5-methyltetrahydropteroyltri-L-glutamate binding site. Positions 663, 665, and 687 each coordinate Zn(2+). The Proton donor role is filled by histidine 716. Cysteine 748 provides a ligand contact to Zn(2+).

The protein belongs to the vitamin-B12 independent methionine synthase family. The cofactor is Zn(2+).

It carries out the reaction 5-methyltetrahydropteroyltri-L-glutamate + L-homocysteine = tetrahydropteroyltri-L-glutamate + L-methionine. The protein operates within amino-acid biosynthesis; L-methionine biosynthesis via de novo pathway; L-methionine from L-homocysteine (MetE route): step 1/1. Catalyzes the transfer of a methyl group from 5-methyltetrahydrofolate to homocysteine resulting in methionine formation. In Bradyrhizobium diazoefficiens (strain JCM 10833 / BCRC 13528 / IAM 13628 / NBRC 14792 / USDA 110), this protein is 5-methyltetrahydropteroyltriglutamate--homocysteine methyltransferase.